Consider the following 266-residue polypeptide: Glucosamine-6-phosphate deaminase (266 aa).

Asp72 (proton acceptor; for enolization step) is an active-site residue. Asp141 functions as the For ring-opening step in the catalytic mechanism. His143 functions as the Proton acceptor; for ring-opening step in the catalytic mechanism. The active-site For ring-opening step is Glu148.

This sequence belongs to the glucosamine/galactosamine-6-phosphate isomerase family. NagB subfamily. Homohexamer.

It carries out the reaction alpha-D-glucosamine 6-phosphate + H2O = beta-D-fructose 6-phosphate + NH4(+). It participates in amino-sugar metabolism; N-acetylneuraminate degradation; D-fructose 6-phosphate from N-acetylneuraminate: step 5/5. Its activity is regulated as follows. Allosterically activated by N-acetylglucosamine 6-phosphate (GlcNAc6P). In terms of biological role, catalyzes the reversible isomerization-deamination of glucosamine 6-phosphate (GlcN6P) to form fructose 6-phosphate (Fru6P) and ammonium ion. The protein is Glucosamine-6-phosphate deaminase of Pectobacterium atrosepticum (strain SCRI 1043 / ATCC BAA-672) (Erwinia carotovora subsp. atroseptica).